The sequence spans 202 residues: ATP-dependent Clp protease proteolytic subunit (202 aa).

The Nucleophile role is filled by Ser106. His131 is an active-site residue.

This sequence belongs to the peptidase S14 family. Fourteen ClpP subunits assemble into 2 heptameric rings which stack back to back to give a disk-like structure with a central cavity, resembling the structure of eukaryotic proteasomes.

The protein resides in the cytoplasm. It carries out the reaction Hydrolysis of proteins to small peptides in the presence of ATP and magnesium. alpha-casein is the usual test substrate. In the absence of ATP, only oligopeptides shorter than five residues are hydrolyzed (such as succinyl-Leu-Tyr-|-NHMec, and Leu-Tyr-Leu-|-Tyr-Trp, in which cleavage of the -Tyr-|-Leu- and -Tyr-|-Trp bonds also occurs).. Functionally, cleaves peptides in various proteins in a process that requires ATP hydrolysis. Has a chymotrypsin-like activity. Plays a major role in the degradation of misfolded proteins. This Acidovorax ebreus (strain TPSY) (Diaphorobacter sp. (strain TPSY)) protein is ATP-dependent Clp protease proteolytic subunit.